A 233-amino-acid polypeptide reads, in one-letter code: Lysoplasmalogenase TMEM86B (233 aa).

Topologically, residues 1–30 (MPCCDPYPWIGLNVGRLSSFPLLKYPQVRR) are cytoplasmic. The helical transmembrane segment at 31–47 (WLAPFIVACSLYFLLWI) threads the bilayer. At 48–53 (PEDQPS) the chain is on the extracellular side. A helical membrane pass occupies residues 54 to 75 (WVSALVKCQPILCLVLFLWAVA). Topologically, residues 76-81 (PGGSYT) are cytoplasmic. The helical transmembrane segment at 82 to 100 (WLLQGALTCSAVGDACLIW) threads the bilayer. Over 101 to 106 (PEAFFY) the chain is Extracellular. A helical transmembrane segment spans residues 107-124 (GMAVFSVAHLLYLWAFGL). The Cytoplasmic segment spans residues 125 to 130 (SPLQPG). Residues 131–147 (LLLCTTLASLTYYSFLL) form a helical membrane-spanning segment. Residues 148-153 (LHLEPN) lie on the Extracellular side of the membrane. A helical transmembrane segment spans residues 154–170 (MVLPVAAYGLILNTMLW). The Cytoplasmic segment spans residues 171–178 (RGLVLGRS). A helical transmembrane segment spans residues 179–195 (AGWGAVLFIFSDGVLAW). Residues 196-206 (DTFVYTLPFAR) lie on the Extracellular side of the membrane. Residues 207–225 (LVTMSTYYAAQLLLTLSAL) form a helical membrane-spanning segment. The Cytoplasmic segment spans residues 226–233 (RSPGLKTH).

It belongs to the TMEM86 family. In terms of assembly, homodimer.

It localises to the endoplasmic reticulum membrane. The protein resides in the cytoplasm. It carries out the reaction a 1-O-(1Z-alkenyl)-sn-glycero-3-phosphocholine + H2O = a 2,3-saturated aldehyde + sn-glycerol 3-phosphocholine. The enzyme catalyses a 1-O-(1Z-alkenyl)-sn-glycero-3-phosphoethanolamine + H2O = a 2,3-saturated aldehyde + sn-glycero-3-phosphoethanolamine. With respect to regulation, competitively inhibited by lysophosphatidic acid. Functionally, catalyzes the hydrolysis of the vinyl ether bond of choline or ethanolamine lysoplasmalogens, forming fatty aldehyde and glycerophosphocholine or glycerophosphoethanolamine, respectively and is specific for the sn-2-deacylated (lyso) form of plasmalogen. The protein is Lysoplasmalogenase TMEM86B (Tmem86b) of Rattus norvegicus (Rat).